Consider the following 656-residue polypeptide: Acyl-CoA-binding domain-containing protein 6 (656 aa).

Residues 8 to 102 form the ACB domain; that stretch reads YPDRFYAAAA…LEEEDPGWYS (95 aa). An acyl-CoA contacts are provided by residues 44-48 and Lys-70; that span reads YGLYQ. Positions 129–148 are disordered; it reads ASTNGTSVPEPKTISENGSS. Kelch repeat units follow at residues 194–241, 254–304, 305–354, 356–405, 406–454, and 461–507; these read KMYI…AQVS, KFFS…LVGT, TLVL…CHAD, YLLI…TVGE, NWYI…LVHS, and YLIS…EPEV. Residues 527-636 are a coiled coil; the sequence is LKKDDANELL…EQAALEAKQR (110 aa). A disordered region spans residues 627–656; sequence EQAALEAKQRQSSSGMWGWLVGTPPDKSES.

It belongs to the ACBP family. In terms of tissue distribution, highly expressed in leaves. Expressed in roots and seeds.

It is found in the peroxisome. Its function is as follows. Binds medium- and long-chain acyl-CoA esters with high affinity. Can interact in vitro with linoleoyl-CoA and linolenoyl-CoA. Binds phosphatidic acid (PA) and phosphatidylcholine (PC) in vitro. May play a role in the biosynthesis of phospholipids. May be involved in lipid degradation via peroxisomal beta-oxydation. The polypeptide is Acyl-CoA-binding domain-containing protein 6 (Oryza sativa subsp. japonica (Rice)).